The primary structure comprises 154 residues: Lipoprotein signal peptidase (154 aa).

The next 3 helical transmembrane spans lie at 4–24 (IIIPIITILLIALDQLSKLWI), 62–82 (LFTLITIFVVCVAIIYLMKHI), and 84–104 (GSYWLLISLTLIISGGLGNFI). Residues Asp-114 and Asp-130 contribute to the active site. A helical membrane pass occupies residues 125–145 (IFNVADSYLTIGIICLMIALW).

The protein belongs to the peptidase A8 family.

Its subcellular location is the cell membrane. The catalysed reaction is Release of signal peptides from bacterial membrane prolipoproteins. Hydrolyzes -Xaa-Yaa-Zaa-|-(S,diacylglyceryl)Cys-, in which Xaa is hydrophobic (preferably Leu), and Yaa (Ala or Ser) and Zaa (Gly or Ala) have small, neutral side chains.. It participates in protein modification; lipoprotein biosynthesis (signal peptide cleavage). Functionally, this protein specifically catalyzes the removal of signal peptides from prolipoproteins. This Streptococcus agalactiae serotype Ia (strain ATCC 27591 / A909 / CDC SS700) protein is Lipoprotein signal peptidase.